The primary structure comprises 301 residues: Asialoglycoprotein receptor 2 (301 aa).

A disordered region spans residues 1 to 29 (MEKDFQDIQQLDSEENDHQLIGDEEQGSH). Over 1 to 58 (MEKDFQDIQQLDSEENDHQLIGDEEQGSHVQNLRTENPRWGGQPPSRPFPQRLCSKFR) the chain is Cytoplasmic. Phosphoserine is present on S13. C54 carries the S-palmitoyl cysteine lipid modification. The helical; Signal-anchor for type II membrane protein transmembrane segment at 59–79 (LSLLALAFNILLLVVICVVSS) threads the bilayer. The Extracellular segment spans residues 80-301 (QSMQLQKEFW…ACERKRDITY (222 aa)). N-linked (GlcNAc...) asparagine glycosylation is found at N97, N119, and N165. The 127-residue stretch at 169-295 (CCPVNWVEFG…QQVNRWACER (127 aa)) folds into the C-type lectin domain. 3 cysteine pairs are disulfide-bonded: C170-C181, C198-C293, and C271-C285.

Interacts with LASS2. As to expression, expressed exclusively in hepatic parenchymal cells.

The protein resides in the membrane. Mediates the endocytosis of plasma glycoproteins to which the terminal sialic acid residue on their complex carbohydrate moieties has been removed. The receptor recognizes terminal galactose and N-acetylgalactosamine units. After ligand binding to the receptor, the resulting complex is internalized and transported to a sorting organelle, where receptor and ligand are disassociated. The receptor then returns to the cell membrane surface. The sequence is that of Asialoglycoprotein receptor 2 (Asgr2) from Rattus norvegicus (Rat).